A 721-amino-acid chain; its full sequence is Polyribonucleotide nucleotidyltransferase (721 aa).

Mg(2+)-binding residues include D495 and D501. The region spanning 562 to 621 (PRITTIKIRPERIKDIIGPGGKTIKDITARTGTSINIEDDGSVSIASPNQDKVEEAIKMI) is the KH domain. Residues 631-699 (GRIYLGTVRK…RSGKIRLSRK (69 aa)) enclose the S1 motif domain. The interval 699–721 (KEALADSAKKSEGTEPPKGEPAK) is disordered.

Belongs to the polyribonucleotide nucleotidyltransferase family. Mg(2+) serves as cofactor.

The protein resides in the cytoplasm. It catalyses the reaction RNA(n+1) + phosphate = RNA(n) + a ribonucleoside 5'-diphosphate. Its function is as follows. Involved in mRNA degradation. Catalyzes the phosphorolysis of single-stranded polyribonucleotides processively in the 3'- to 5'-direction. The protein is Polyribonucleotide nucleotidyltransferase of Anaeromyxobacter sp. (strain K).